Consider the following 305-residue polypeptide: MIFQQTLGNKATFSGIGLHTGKTITLTLRPAEAGTGIVFHRVDLAPAVSIEAHASNVVNTRLSTTIGRGDASVSTIEHLMAALYGCGIDNAHVDIDGPEVPIMDGSAAPFVAAITKAGVKVSGKARKYLVVKKPVTVVDGDKKATIIPSRHYKISFDMQFAHPAVKSQFRSLEFSQESFIGDFAAARTFGFLAEVEMMKSHGLALGGSLENAVVIGDNGVINPEGLRFQDEFVRHKILDSVGDLSLTGHRLIGHVKATKSGHDLNHKLVTELLKRPDCYTLIEFTPQAFNAPFNIGIPELSWLEA.

Positions 78, 235, and 239 each coordinate Zn(2+). His262 acts as the Proton donor in catalysis.

The protein belongs to the LpxC family. The cofactor is Zn(2+).

The enzyme catalyses a UDP-3-O-[(3R)-3-hydroxyacyl]-N-acetyl-alpha-D-glucosamine + H2O = a UDP-3-O-[(3R)-3-hydroxyacyl]-alpha-D-glucosamine + acetate. It participates in glycolipid biosynthesis; lipid IV(A) biosynthesis; lipid IV(A) from (3R)-3-hydroxytetradecanoyl-[acyl-carrier-protein] and UDP-N-acetyl-alpha-D-glucosamine: step 2/6. Functionally, catalyzes the hydrolysis of UDP-3-O-myristoyl-N-acetylglucosamine to form UDP-3-O-myristoylglucosamine and acetate, the committed step in lipid A biosynthesis. The chain is UDP-3-O-acyl-N-acetylglucosamine deacetylase from Citrifermentans bemidjiense (strain ATCC BAA-1014 / DSM 16622 / JCM 12645 / Bem) (Geobacter bemidjiensis).